Consider the following 199-residue polypeptide: Peptidyl-tRNA hydrolase (199 aa).

Position 25 (Y25) interacts with tRNA. H30 acts as the Proton acceptor in catalysis. 3 residues coordinate tRNA: Y76, N78, and N124.

This sequence belongs to the PTH family. As to quaternary structure, monomer.

The protein resides in the cytoplasm. The catalysed reaction is an N-acyl-L-alpha-aminoacyl-tRNA + H2O = an N-acyl-L-amino acid + a tRNA + H(+). Hydrolyzes ribosome-free peptidyl-tRNAs (with 1 or more amino acids incorporated), which drop off the ribosome during protein synthesis, or as a result of ribosome stalling. Functionally, catalyzes the release of premature peptidyl moieties from peptidyl-tRNA molecules trapped in stalled 50S ribosomal subunits, and thus maintains levels of free tRNAs and 50S ribosomes. The protein is Peptidyl-tRNA hydrolase of Mycobacterium leprae (strain Br4923).